Consider the following 166-residue polypeptide: Ribosome maturation factor RimM (166 aa).

Residues 94–166 (GDEYYWRDLM…EMVVRLLPGL (73 aa)) enclose the PRC barrel domain.

It belongs to the RimM family. Binds ribosomal protein uS19.

Its subcellular location is the cytoplasm. In terms of biological role, an accessory protein needed during the final step in the assembly of 30S ribosomal subunit, possibly for assembly of the head region. Essential for efficient processing of 16S rRNA. May be needed both before and after RbfA during the maturation of 16S rRNA. It has affinity for free ribosomal 30S subunits but not for 70S ribosomes. The polypeptide is Ribosome maturation factor RimM (Syntrophus aciditrophicus (strain SB)).